Reading from the N-terminus, the 196-residue chain is uncharacterized protein (196 aa).

It is found in the mitochondrion. This is an uncharacterized protein from Paramecium tetraurelia.